The primary structure comprises 777 residues: Myotubularin-related protein 10 (777 aa).

The interval 196–217 is disordered; that stretch reads PSGDGGGGGGGGNGAGGGSSQK. Positions 197-214 are enriched in gly residues; it reads SGDGGGGGGGGNGAGGGS. The region spanning 221–661 is the Myotubularin phosphatase domain; that stretch reads FETYSDWDRE…THIKLWKLCY (441 aa). A phosphoserine mark is found at Ser-607 and Ser-751.

This sequence belongs to the protein-tyrosine phosphatase family. Non-receptor class myotubularin subfamily.

This Homo sapiens (Human) protein is Myotubularin-related protein 10 (MTMR10).